Reading from the N-terminus, the 201-residue chain is MRLRNIPDALERIQNQNLLVKTPWNIDDSWIIEIGMGKGKMISQLAFDNPNKNFLGVEKYPSAAVKAIKYVKKYNLSNFFILISDAKDLLDRIKGKASTIWLTFPDPWPKNRHYKRRLTYKDFLEIYANLLVKDGILKLKTDNLKFFEFSIESLKENGWKITYQTNDLHNSLVNSSNIKTTYEEKWVNLNYKIHYLEAIFI.

S-adenosyl-L-methionine-binding residues include E33, E58, D85, and D106. Residue D106 is part of the active site. Substrate is bound by residues K110, D142, and 180 to 183 (TTYE).

Belongs to the class I-like SAM-binding methyltransferase superfamily. TrmB family.

It carries out the reaction guanosine(46) in tRNA + S-adenosyl-L-methionine = N(7)-methylguanosine(46) in tRNA + S-adenosyl-L-homocysteine. It functions in the pathway tRNA modification; N(7)-methylguanine-tRNA biosynthesis. In terms of biological role, catalyzes the formation of N(7)-methylguanine at position 46 (m7G46) in tRNA. The sequence is that of tRNA (guanine-N(7)-)-methyltransferase from Mesomycoplasma hyopneumoniae (strain J / ATCC 25934 / NCTC 10110) (Mycoplasma hyopneumoniae).